A 548-amino-acid chain; its full sequence is Membrane protein insertase YidC (548 aa).

Residues 6–26 (NLLVIALLFVSFMIWQAWEQD) form a helical membrane-spanning segment. Positions 28–55 (NPQPQAQQTTQTTTTAAGSAADQGVPAS) are disordered. A compositionally biased stretch (low complexity) spans 30–50 (QPQAQQTTQTTTTAAGSAADQ). The next 4 helical transmembrane spans lie at 350–370 (FVGN…GIMY), 420–440 (LGGC…YYML), 458–478 (LSAQ…MFFI), and 499–519 (PVIF…YYIV).

This sequence belongs to the OXA1/ALB3/YidC family. Type 1 subfamily. As to quaternary structure, interacts with the Sec translocase complex via SecD. Specifically interacts with transmembrane segments of nascent integral membrane proteins during membrane integration.

The protein localises to the cell inner membrane. Functionally, required for the insertion and/or proper folding and/or complex formation of integral membrane proteins into the membrane. Involved in integration of membrane proteins that insert both dependently and independently of the Sec translocase complex, as well as at least some lipoproteins. Aids folding of multispanning membrane proteins. The sequence is that of Membrane protein insertase YidC from Escherichia coli (strain K12 / MC4100 / BW2952).